Consider the following 282-residue polypeptide: Phycocyanobilin lyase subunit beta (282 aa).

The protein belongs to the CpcE/RpcE/PecE family. As to quaternary structure, cpcE and CpcF associate to form a lyase.

Required for the chromophorylation of the CpcA gene product. The polypeptide is Phycocyanobilin lyase subunit beta (cpcF1) (Pseudanabaena tenuis (strain PCC 7409)).